The sequence spans 401 residues: CLIP domain-containing serine protease B9 (401 aa).

A signal peptide spans 1–26 (MTSYNRSVAWLTVCVLLALHIGGSHQ). The Clip domain occupies 30–85 (QCTTPTRLRGRCISIYECDSILDYFKQRILTWEEREFLRKSQCTGATSGRQPFVCC). 3 disulfide bridges follow: Cys-31–Cys-84, Cys-41–Cys-72, and Cys-47–Cys-85. A glycan (N-linked (GlcNAc...) asparagine) is linked at Asn-88. In terms of domain architecture, Peptidase S1 spans 148–400 (IYGGQNADID…YMAWVRSNIK (253 aa)). A disulfide bridge links Cys-178 with Cys-194. Catalysis depends on charge relay system residues His-193 and Asp-257. 2 disulfide bridges follow: Cys-322–Cys-339 and Cys-349–Cys-376. Residue Asn-330 is glycosylated (N-linked (GlcNAc...) asparagine). Residue Ser-353 is the Charge relay system of the active site.

Belongs to the peptidase S1 family. CLIP subfamily. Forms a covalent heterodimer with SRPN2; the interaction inhibits CLIPB9 protease activity. Post-translationally, proteolytic cleavage is necessary for activation.

Its subcellular location is the secreted. Its activity is regulated as follows. Inhibited by serpin SRPN2. Serine protease that functions in the melanization-mediated immune response. Cleaves and activates prophenoloxidase (PPO), which is required for the activation of the prophenoloxidase cascade probably following the recognition of pathogen-derived products. The polypeptide is CLIP domain-containing serine protease B9 (Anopheles gambiae (African malaria mosquito)).